A 942-amino-acid polypeptide reads, in one-letter code: Calcium-activated chloride channel regulator 2 (942 aa).

Positions methionine 1 to glycine 32 are cleaved as a signal peptide. The Extracellular segment spans residues leucine 33–valine 905. The metalloprotease domain stretch occupies residues aspartate 54–valine 205. Residues asparagine 74 and asparagine 97 are each glycosylated (N-linked (GlcNAc...) asparagine). Histidine 164 lines the Zn(2+) pocket. The active site involves glutamate 165. 2 residues coordinate Zn(2+): histidine 168 and aspartate 175. Residues asparagine 231, asparagine 235, asparagine 254, and asparagine 286 are each glycosylated (N-linked (GlcNAc...) asparagine). One can recognise a VWFA domain in the interval valine 311–isoleucine 483. N-linked (GlcNAc...) asparagine glycosylation is found at asparagine 522, asparagine 580, asparagine 637, and asparagine 821. Residues leucine 906–phenylalanine 926 traverse the membrane as a helical segment. Topologically, residues asparagine 927–leucine 942 are cytoplasmic.

It belongs to the CLCR family. Post-translationally, the translation product is autoproteolytically cleaved by the metalloprotease domain in the endoplasmic reticulum into a N-terminal and a C-terminal products that remain physically associated with each other. The cleavage is necessary for calcium-activated chloride channel (CaCC) activation activity. In terms of processing, N-glycosylated. As to expression, highly expressed in eye, spleen, lung, kidney, uterus, and endothelial cells. Weakly expressed in heart and throughout the gastrointestinal tract. Highly expressed in mammary cell lines. Its expression in immortalized cell line HC11 correlates with slow or arrested growth. Re-expression in mammary tumor cells reduces colony survival.

It localises to the cell membrane. Its subcellular location is the basal cell membrane. The protein localises to the cell junction. In terms of biological role, plays a role in modulating chloride current across the plasma membrane in a calcium-dependent manner, and cell adhesion. Involved in basal cell adhesion and/or stratification of squamous epithelia. May act as a tumor suppressor in breast and colorectal cancer. Plays a key role for cell adhesion in the beginning stages of lung metastasis via the binding to ITGB4. The chain is Calcium-activated chloride channel regulator 2 (Clca2) from Mus musculus (Mouse).